A 302-amino-acid chain; its full sequence is Recombination-associated protein RdgC (302 aa).

This sequence belongs to the RdgC family.

It is found in the cytoplasm. The protein resides in the nucleoid. Its function is as follows. May be involved in recombination. The chain is Recombination-associated protein RdgC from Actinobacillus succinogenes (strain ATCC 55618 / DSM 22257 / CCUG 43843 / 130Z).